Here is a 293-residue protein sequence, read N- to C-terminus: NAD-dependent protein deacetylase (293 aa).

Positions 1–284 constitute a Deacetylase sirtuin-type domain; sequence MTVAITQTGP…QPPDPLHTAT (284 aa). NAD(+)-binding positions include 27–47 and 105–108; these read GAGCSTDSGIPDYRDLQGGWK and QNVD. His123 serves as the catalytic Proton acceptor. Zn(2+) is bound by residues Cys131, Cys134, Cys182, and Cys185. Residues 222-224, 248-250, and Cys266 each bind NAD(+); these read GSS and NFG.

Belongs to the sirtuin family. Class II subfamily. It depends on Zn(2+) as a cofactor.

It localises to the cytoplasm. The enzyme catalyses N(6)-acetyl-L-lysyl-[protein] + NAD(+) + H2O = 2''-O-acetyl-ADP-D-ribose + nicotinamide + L-lysyl-[protein]. Functionally, NAD-dependent protein deacetylase which modulates the activities of several enzymes which are inactive in their acetylated form. The sequence is that of NAD-dependent protein deacetylase from Xanthomonas campestris pv. campestris (strain 8004).